We begin with the raw amino-acid sequence, 285 residues long: Polyamine aminopropyltransferase (285 aa).

The PABS domain occupies 5–241 (DNWYIEHFQP…GWWSVTMASK (237 aa)). Glutamine 35 contributes to the S-methyl-5'-thioadenosine binding site. Histidine 66 and aspartate 90 together coordinate spermidine. S-methyl-5'-thioadenosine-binding positions include aspartate 110 and 141–142 (DG). Aspartate 160 serves as the catalytic Proton acceptor. 160-163 (DSTD) contributes to the spermidine binding site. Proline 167 lines the S-methyl-5'-thioadenosine pocket.

The protein belongs to the spermidine/spermine synthase family. As to quaternary structure, homodimer or homotetramer.

The protein localises to the cytoplasm. The catalysed reaction is S-adenosyl 3-(methylsulfanyl)propylamine + putrescine = S-methyl-5'-thioadenosine + spermidine + H(+). It functions in the pathway amine and polyamine biosynthesis; spermidine biosynthesis; spermidine from putrescine: step 1/1. Functionally, catalyzes the irreversible transfer of a propylamine group from the amino donor S-adenosylmethioninamine (decarboxy-AdoMet) to putrescine (1,4-diaminobutane) to yield spermidine. The protein is Polyamine aminopropyltransferase of Xanthomonas euvesicatoria pv. vesicatoria (strain 85-10) (Xanthomonas campestris pv. vesicatoria).